Consider the following 345-residue polypeptide: UDP-N-acetylenolpyruvoylglucosamine reductase (345 aa).

Positions 15–218 (VDVYAEKVII…NTIIFLRYKK (204 aa)) constitute an FAD-binding PCMH-type domain. Arg-161 is an active-site residue. The Proton donor role is filled by Ser-230. Residue Glu-327 is part of the active site.

Belongs to the MurB family. It depends on FAD as a cofactor.

The protein resides in the cytoplasm. The catalysed reaction is UDP-N-acetyl-alpha-D-muramate + NADP(+) = UDP-N-acetyl-3-O-(1-carboxyvinyl)-alpha-D-glucosamine + NADPH + H(+). The protein operates within cell wall biogenesis; peptidoglycan biosynthesis. In terms of biological role, cell wall formation. The polypeptide is UDP-N-acetylenolpyruvoylglucosamine reductase (Blochmanniella floridana).